We begin with the raw amino-acid sequence, 514 residues long: 5'-AMP-activated protein kinase subunit gamma-3 (514 aa).

Disordered stretches follow at residues 1-121 and 134-155; these read MELA…FPKA and DNPPTERDILPSDCAASASDSN. Positions 59–71 are enriched in polar residues; the sequence is SRSWPSRAVTTSS. 3 consecutive CBS domains span residues 222 to 283, 305 to 363, and 380 to 440; these read MATS…RSPL, CFKP…GTLL, and TFRD…HLDM. ADP contacts are provided by residues Arg-250, 265-270, Val-310, 331-332, and Lys-350; these read MLTITD and HR. AMP is bound by residues Arg-250, 265–270, Val-310, His-331, 331–332, Lys-350, Thr-380, Ala-385, 406–407, 422–425, Arg-449, Leu-457, His-478, 478–479, and 494–497; these read MLTITD, HR, SA, SRFD, and SLSD. ATP is bound by residues Arg-250, 265–270, Val-310, 331–332, Arg-332, and Lys-350; these read MLTITD and HR. The AMPK pseudosubstrate signature appears at 318-339; the sequence is LFEAVYALIKNRIHRLPVLDPV. Residues 422-425, Arg-449, Leu-457, and 478-479 each bind ADP; these read SRFD and HR. ATP-binding positions include 422–425, Arg-449, Leu-457, and 478–479; these read SRFD and HR. The CBS 4 domain maps to 452 to 511; the sequence is CLEGVLSCQPHETLGEVIDRIVREQVHRLVLVDETQHLLGVVSLSDILQALVLSPAGIDA.

It belongs to the 5'-AMP-activated protein kinase gamma subunit family. In terms of assembly, AMPK is a heterotrimer of an alpha catalytic subunit (PRKAA1 or PRKAA2), a beta (PRKAB1 or PRKAB2) and a gamma non-catalytic subunits (PRKAG1, PRKAG2 or PRKAG3). Interacts with FNIP1 and FNIP2. Phosphorylated by ULK1; leading to negatively regulate AMPK activity and suggesting the existence of a regulatory feedback loop between ULK1 and AMPK. In terms of processing, glycosylated; O-GlcNAcylated by OGT, promoting the AMP-activated protein kinase (AMPK) activity. As to expression, muscle.

In terms of biological role, AMP/ATP-binding subunit of AMP-activated protein kinase (AMPK), an energy sensor protein kinase that plays a key role in regulating cellular energy metabolism. In response to reduction of intracellular ATP levels, AMPK activates energy-producing pathways and inhibits energy-consuming processes: inhibits protein, carbohydrate and lipid biosynthesis, as well as cell growth and proliferation. AMPK acts via direct phosphorylation of metabolic enzymes, and by longer-term effects via phosphorylation of transcription regulators. AMPK also acts as a regulator of cellular polarity by remodeling the actin cytoskeleton; probably by indirectly activating myosin. The AMPK gamma3 subunit is a non-catalytic subunit with a regulatory role in muscle energy metabolism. It mediates binding to AMP, ADP and ATP, leading to AMPK activation or inhibition: AMP-binding results in allosteric activation of alpha catalytic subunit (PRKAA1 or PRKAA2) both by inducing phosphorylation and preventing dephosphorylation of catalytic subunits. ADP also stimulates phosphorylation, without stimulating already phosphorylated catalytic subunit. ATP promotes dephosphorylation of catalytic subunit, rendering the AMPK enzyme inactive. The polypeptide is 5'-AMP-activated protein kinase subunit gamma-3 (PRKAG3) (Sus scrofa (Pig)).